Here is a 509-residue protein sequence, read N- to C-terminus: Legumin A (509 aa).

Residues 1-21 (MAINPSLLFLSLLFLFNGCLA) form the signal peptide. 2 disulfide bridges follow: cysteine 34/cysteine 67 and cysteine 110/cysteine 331. The region spanning 39-273 (LRASAPQTRI…AFNVDHDIIR (235 aa)) is the Cupin type-1 1 domain. Disordered regions lie at residues 187–248 (AGNP…ESSS) and 298–325 (PRMEEEEREERQQEQRYRHTRGGSQDNG). Acidic residues predominate over residues 212 to 228 (EESEEEEGEGEEEEEED). A compositionally biased stretch (basic and acidic residues) spans 299–314 (RMEEEEREERQQEQRY). One can recognise a Cupin type-1 2 domain in the interval 337–486 (ENLADPERAD…SYQVSREDAR (150 aa)).

The protein belongs to the 11S seed storage protein (globulins) family. Hexamer; each subunit is composed of an acidic and a basic chain derived from a single precursor and linked by a disulfide bond.

This is a seed storage protein. The chain is Legumin A (LEGA) from Gossypium hirsutum (Upland cotton).